The primary structure comprises 461 residues: UDP-glycosyltransferase 88B1 (461 aa).

UDP-alpha-D-glucose is bound by residues Ser278, 340-341 (WA), 358-366 (HCGWNSSLE), and 380-383 (YAEQ).

This sequence belongs to the UDP-glycosyltransferase family.

Its function is as follows. May glycosylate diterpenes or flavonols in leaves. The sequence is that of UDP-glycosyltransferase 88B1 from Stevia rebaudiana (Stevia).